The chain runs to 210 residues: GEM-like protein 7 (210 aa).

The GRAM domain maps to 88 to 166 (KIYKRLFKVC…CKINGVNQSQ (79 aa)).

Belongs to the GEM family.

The polypeptide is GEM-like protein 7 (Arabidopsis thaliana (Mouse-ear cress)).